Here is a 293-residue protein sequence, read N- to C-terminus: 33 kDa chaperonin (293 aa).

Disulfide bonds link C238/C240 and C271/C274.

The protein belongs to the HSP33 family. In terms of processing, under oxidizing conditions two disulfide bonds are formed involving the reactive cysteines. Under reducing conditions zinc is bound to the reactive cysteines and the protein is inactive.

Its subcellular location is the cytoplasm. Its function is as follows. Redox regulated molecular chaperone. Protects both thermally unfolding and oxidatively damaged proteins from irreversible aggregation. Plays an important role in the bacterial defense system toward oxidative stress. The sequence is that of 33 kDa chaperonin from Staphylococcus aureus (strain Mu3 / ATCC 700698).